The primary structure comprises 500 residues: Glycerol kinase (500 aa).

T15 serves as a coordination point for ADP. ATP-binding residues include T15, T16, and S17. A sn-glycerol 3-phosphate-binding site is contributed by T15. R19 is an ADP binding site. Residues R85, E86, Y137, and D245 each coordinate sn-glycerol 3-phosphate. Glycerol contacts are provided by R85, E86, Y137, D245, and Q246. The ADP site is built by T267 and G310. ATP is bound by residues T267, G310, Q314, and G411. Residues G411 and N415 each coordinate ADP.

It belongs to the FGGY kinase family.

The catalysed reaction is glycerol + ATP = sn-glycerol 3-phosphate + ADP + H(+). Its pathway is polyol metabolism; glycerol degradation via glycerol kinase pathway; sn-glycerol 3-phosphate from glycerol: step 1/1. Its activity is regulated as follows. Inhibited by fructose 1,6-bisphosphate (FBP). Its function is as follows. Key enzyme in the regulation of glycerol uptake and metabolism. Catalyzes the phosphorylation of glycerol to yield sn-glycerol 3-phosphate. The protein is Glycerol kinase of Aeromonas salmonicida (strain A449).